Here is a 121-residue protein sequence, read N- to C-terminus: Heme-degrading monooxygenase (121 aa).

Residues 2–101 (IIVTNTIKVE…EQREDRKGIV (100 aa)) form the ABM domain. Residue asparagine 6 coordinates Fe cation. Positions 76 to 98 (KSDSFKKAHGRTKDTREQREDRK) are disordered. Residues 78–98 (DSFKKAHGRTKDTREQREDRK) show a composition bias toward basic and acidic residues. Histidine 84 serves as a coordination point for heme.

Belongs to the antibiotic biosynthesis monooxygenase family. Heme-degrading monooxygenase IsdG subfamily. In terms of assembly, homodimer.

It localises to the cytoplasm. The catalysed reaction is heme b + 3 reduced [NADPH--hemoprotein reductase] + 3 O2 = biliverdin IXalpha + CO + Fe(2+) + 3 oxidized [NADPH--hemoprotein reductase] + 3 H2O + H(+). Functionally, allows bacterial pathogens to use the host heme as an iron source. Catalyzes the oxidative degradation of the heme macrocyclic porphyrin ring to the biliverdin in the presence of a suitable electron donor such as ascorbate or NADPH--cytochrome P450 reductase, with subsequent release of free iron. This is Heme-degrading monooxygenase from Listeria welshimeri serovar 6b (strain ATCC 35897 / DSM 20650 / CCUG 15529 / CIP 8149 / NCTC 11857 / SLCC 5334 / V8).